The following is a 497-amino-acid chain: MASIHADVTLVGGGIMSATLAMLIHRLDPALHICMIEQLPDIALESSGALNNAGTGHAGYCELNYTPHDKDGNVLIQRALEINAAFEVSLQFWSHLVNADRENITPSSFINRVPHLSAVWGQKDIDFLKARYTLLKSHHLFSEMKWSEDEQTLADWMPLMMKGRQAEPKLAATRVEHGADVNFGALTRILVSYLQKNANFELLTNTRVVDLHRAHGAKKPWAVKVKNQNSAAKQTIESPFVFLGAGGVALHLLQNSGIEEAAGYGGFPVSGQWLICQNQDLIRQHHAKVYSLAAVGAPPMSVPHLDTRIINGKPSLLFGPYAGFTTKFLKHGSPFDLAKSVRPHNLKSLIGAGKNNFDLTKYLVKEVFQTHSQRMQSLEAFIPNARAEDWQLAHAGKRVQIIKRCHHKWGKLEFGTEIVAAEDGSLAALLGASPGASVSVKTMLDVLERCFPQQMQSAEWQDKLKTMIPSYGRSLINDANLSASVRRYTLDTLKLSS.

Belongs to the MQO family. It depends on FAD as a cofactor.

It catalyses the reaction (S)-malate + a quinone = a quinol + oxaloacetate. It participates in carbohydrate metabolism; tricarboxylic acid cycle; oxaloacetate from (S)-malate (quinone route): step 1/1. This chain is Probable malate:quinone oxidoreductase, found in Tolumonas auensis (strain DSM 9187 / NBRC 110442 / TA 4).